A 626-amino-acid chain; its full sequence is Chaperone protein HtpG (626 aa).

Positions 1–341 (MRKKKFKAES…SEDLSLNISR (341 aa)) are a; substrate-binding. The segment at 342-552 (EMLQHDRQLK…DGEVTIEMEK (211 aa)) is b. The tract at residues 553-626 (VLNAMPDSQQ…FTNDICKVMV (74 aa)) is c.

Belongs to the heat shock protein 90 family. As to quaternary structure, homodimer.

The protein localises to the cytoplasm. Its function is as follows. Molecular chaperone. Has ATPase activity. The protein is Chaperone protein HtpG of Bacillus velezensis (strain DSM 23117 / BGSC 10A6 / LMG 26770 / FZB42) (Bacillus amyloliquefaciens subsp. plantarum).